We begin with the raw amino-acid sequence, 490 residues long: MKGLLSLSVLPVLAYASPMIVDSIHQDAAPILSSTNAKDIPDSYIVVFKKGVSSSSALAHQTWVQEIHTSTESKRLKKRNQFTFKNEAFDGLKHTFDIAGGLLGYSGHFDEEVIEQVRRHPDVEYIERDSEVRALESVTENGAPWGLARISHRKRLNFGTFNKYIYAAQGGEGVDAYVIDTGTNIEHVDFEGRASWGKTIPENDDDIDGNGHGTHCSGTIAGKKYGVAKKAHVHAVKVLRTSGSGTMSDVVKGVQWAAESHLKQVGETKKGNRKGFKGSVANMSLGGGKSVTLDRVVDQAVAVGMHFAVAAGNDNADACNYSPAASQNSITVGASTLTDERAYFSNYGKCTDIFAPGLNIQSTWIGSKYAVNTISGTSMASPHICGLLAYFLSLQPASDSAFAVAEITPAEMKENMISIASKNALTDIPADTPNLLAWNGGGSDNYKEIVGGKDNATKEHISSTLTEKLEQLAEEGLTAIYNELKDVVVA.

Residues 1-26 (MKGLLSLSVLPVLAYASPMIVDSIHQ) form the signal peptide. The propeptide occupies 27–134 (DAAPILSSTN…YIERDSEVRA (108 aa)). In terms of domain architecture, Inhibitor I9 spans 43-133 (SYIVVFKKGV…EYIERDSEVR (91 aa)). The 307-residue stretch at 144–450 (PWGLARISHR…GGSDNYKEIV (307 aa)) folds into the Peptidase S8 domain. Residues D180 and H212 each act as charge relay system in the active site. A glycan (N-linked (GlcNAc...) asparagine) is linked at N282. S378 acts as the Charge relay system in catalysis. N455 is a glycosylation site (N-linked (GlcNAc...) asparagine).

The protein belongs to the peptidase S8 family.

The protein resides in the secreted. Its function is as follows. Secreted subtilisin-like serine protease with keratinolytic activity that contributes to pathogenicity. The polypeptide is Subtilisin-like protease 8 (SUB8) (Arthroderma otae (strain ATCC MYA-4605 / CBS 113480) (Microsporum canis)).